A 597-amino-acid polypeptide reads, in one-letter code: Phosphoinositide phosphatase SAC7 (597 aa).

The region spanning L130–G458 is the SAC domain. Positions R393–N404 match the Phosphatase catalytic core motif. 2 helical membrane-spanning segments follow: residues A528–M548 and H559–V579.

As to expression, ubiquitous.

The protein resides in the endoplasmic reticulum membrane. The protein localises to the cytoplasmic vesicle membrane. Its function is as follows. Phosphoinositide phosphatase that preferentially hydrolyzes PtdIns(4)P. Regulates the accumulation of PtdIns(4)P on membrane compartments at the tips of growing root hairs leading to proper root hair development. The protein is Phosphoinositide phosphatase SAC7 (SAC7) of Arabidopsis thaliana (Mouse-ear cress).